A 254-amino-acid chain; its full sequence is Protein N-terminal and lysine N-methyltransferase EFM7 (254 aa).

S-adenosyl-L-methionine contacts are provided by residues W57, 84–86 (GAA), D106, W138, and S165.

Belongs to the class I-like SAM-binding methyltransferase superfamily. EFM7 family.

Its subcellular location is the cytoplasm. Its function is as follows. S-adenosyl-L-methionine-dependent protein methyltransferase that trimethylates the N-terminal glycine 'Gly-2' of elongation factor 1-alpha, before also catalyzing the mono- and dimethylation of 'Lys-3'. In Debaryomyces hansenii (strain ATCC 36239 / CBS 767 / BCRC 21394 / JCM 1990 / NBRC 0083 / IGC 2968) (Yeast), this protein is Protein N-terminal and lysine N-methyltransferase EFM7.